The primary structure comprises 326 residues: Vestitone reductase (326 aa).

Residues 12 to 18 (GGTGFLG), Arg37, and Tyr164 contribute to the NADP(+) site.

Belongs to the NAD(P)-dependent epimerase/dehydratase family. Dihydroflavonol-4-reductase subfamily. In terms of assembly, monomer. In terms of tissue distribution, detected in roots, and at lower levels in root nodules. Not detected in petioles, leaf and stem.

It catalyses the reaction a (3R,4R)-4,2'-dihydroxyisoflavan + NADP(+) = a (3R)-2'-hydroxyisoflavanone + NADPH + H(+). With respect to regulation, inhibited by vestitone concentrations above 50 uM. Functionally, stereospecific enzyme that catalyzes the NADPH-dependent reduction of (3R)-vestitone to (3R,4R)-4'-methoxyisoflavan-2',4,7-triol (DMI). Has no activity with (3S)-vestitone. Catalyzes the penultimate step in the biosynthesis of the phytoalexin medicarpin, and thereby contributes to plant defense reactions. The protein is Vestitone reductase of Medicago sativa (Alfalfa).